We begin with the raw amino-acid sequence, 608 residues long: UvrABC system protein C (608 aa).

The region spanning 22-100 is the GIY-YIG domain; the sequence is EKPGIYQYLN…IKKYKPRYNV (79 aa). The 36-residue stretch at 214-249 folds into the UVR domain; that stretch reads QEISRLLYQRMQDLAAEMKFEEAQKVKEKYALIENY.

It belongs to the UvrC family. In terms of assembly, interacts with UvrB in an incision complex.

The protein resides in the cytoplasm. Functionally, the UvrABC repair system catalyzes the recognition and processing of DNA lesions. UvrC both incises the 5' and 3' sides of the lesion. The N-terminal half is responsible for the 3' incision and the C-terminal half is responsible for the 5' incision. This chain is UvrABC system protein C, found in Bacteroides fragilis (strain ATCC 25285 / DSM 2151 / CCUG 4856 / JCM 11019 / LMG 10263 / NCTC 9343 / Onslow / VPI 2553 / EN-2).